Reading from the N-terminus, the 398-residue chain is Tyrosine--tRNA ligase (398 aa).

Positions 48–57 match the 'HIGH' region motif; sequence PTGADIHLGH. The 'KMSKS' region signature appears at 235-239; the sequence is KMSKS. Lysine 238 lines the ATP pocket. The S4 RNA-binding domain maps to 334–398; sequence VKLAYLLGAT…GKNKFVRLVL (65 aa).

This sequence belongs to the class-I aminoacyl-tRNA synthetase family. TyrS type 2 subfamily. In terms of assembly, homodimer.

It is found in the cytoplasm. The catalysed reaction is tRNA(Tyr) + L-tyrosine + ATP = L-tyrosyl-tRNA(Tyr) + AMP + diphosphate + H(+). Functionally, catalyzes the attachment of tyrosine to tRNA(Tyr) in a two-step reaction: tyrosine is first activated by ATP to form Tyr-AMP and then transferred to the acceptor end of tRNA(Tyr). The protein is Tyrosine--tRNA ligase of Trichormus variabilis (strain ATCC 29413 / PCC 7937) (Anabaena variabilis).